A 1068-amino-acid polypeptide reads, in one-letter code: Carbamoyl phosphate synthase large chain (1068 aa).

The carboxyphosphate synthetic domain stretch occupies residues 1–401; that stretch reads MPRRTDLHRI…SLLKAVRSLE (401 aa). Residues arginine 129, arginine 169, glycine 175, glycine 176, glutamine 208, isoleucine 210, glutamate 215, glycine 241, valine 242, histidine 243, glutamine 284, and glutamate 298 each coordinate ATP. In terms of domain architecture, ATP-grasp 1 spans 133 to 327; that stretch reads KQLMDELGQP…IAKIAAKIAV (195 aa). Mg(2+)-binding residues include glutamine 284, glutamate 298, and asparagine 300. Mn(2+) is bound by residues glutamine 284, glutamate 298, and asparagine 300. An oligomerization domain region spans residues 402–546; that stretch reads IGVDHLALRE…YSTYEMENES (145 aa). The tract at residues 547-935 is carbamoyl phosphate synthetic domain; the sequence is KKSQRPSVLV…ALYKVFEAAN (389 aa). An ATP-grasp 2 domain is found at 671–867; that stretch reads ESLLAELGIP…MAEVATRIIL (197 aa). Arginine 707, arginine 746, leucine 748, glutamate 752, glycine 777, valine 778, histidine 779, serine 780, glutamine 820, and glutamate 838 together coordinate ATP. Residues glutamine 820, glutamate 838, and asparagine 840 each coordinate Mg(2+). Glutamine 820, glutamate 838, and asparagine 840 together coordinate Mn(2+). The MGS-like domain maps to 936-1068; that stretch reads LHVPEYGKIL…ESRVFSTESI (133 aa). Residues 936-1068 are allosteric domain; that stretch reads LHVPEYGKIL…ESRVFSTESI (133 aa).

Belongs to the CarB family. Composed of two chains; the small (or glutamine) chain promotes the hydrolysis of glutamine to ammonia, which is used by the large (or ammonia) chain to synthesize carbamoyl phosphate. Tetramer of heterodimers (alpha,beta)4. It depends on Mg(2+) as a cofactor. Mn(2+) serves as cofactor.

It catalyses the reaction hydrogencarbonate + L-glutamine + 2 ATP + H2O = carbamoyl phosphate + L-glutamate + 2 ADP + phosphate + 2 H(+). It carries out the reaction hydrogencarbonate + NH4(+) + 2 ATP = carbamoyl phosphate + 2 ADP + phosphate + 2 H(+). Its pathway is amino-acid biosynthesis; L-arginine biosynthesis; carbamoyl phosphate from bicarbonate: step 1/1. It participates in pyrimidine metabolism; UMP biosynthesis via de novo pathway; (S)-dihydroorotate from bicarbonate: step 1/3. Large subunit of the glutamine-dependent carbamoyl phosphate synthetase (CPSase). CPSase catalyzes the formation of carbamoyl phosphate from the ammonia moiety of glutamine, carbonate, and phosphate donated by ATP, constituting the first step of 2 biosynthetic pathways, one leading to arginine and/or urea and the other to pyrimidine nucleotides. The large subunit (synthetase) binds the substrates ammonia (free or transferred from glutamine from the small subunit), hydrogencarbonate and ATP and carries out an ATP-coupled ligase reaction, activating hydrogencarbonate by forming carboxy phosphate which reacts with ammonia to form carbamoyl phosphate. This Cutibacterium acnes (strain DSM 16379 / KPA171202) (Propionibacterium acnes) protein is Carbamoyl phosphate synthase large chain.